The chain runs to 293 residues: Small ribosomal subunit protein uS2 (293 aa).

Residues 239–293 are disordered; the sequence is PAGGADWEAAPAGFPAAATGEWSEAQPATWESGAAAATGPSTEWADSAPKDTAGW. Residues 247–256 are compositionally biased toward low complexity; sequence AAPAGFPAAA.

Belongs to the universal ribosomal protein uS2 family. Component of the small ribosomal subunit. Mature ribosomes consist of a small (40S) and a large (60S) subunit. The 40S subunit contains about 33 different proteins and 1 molecule of RNA (18S). The 60S subunit contains about 49 different proteins and 3 molecules of RNA (25S, 5.8S and 5S). Interacts with RPS21.

The protein resides in the cytoplasm. In terms of biological role, required for the assembly and/or stability of the 40S ribosomal subunit. Required for the processing of the 20S rRNA-precursor to mature 18S rRNA in a late step of the maturation of 40S ribosomal subunits. This chain is Small ribosomal subunit protein uS2, found in Chaetomium globosum (strain ATCC 6205 / CBS 148.51 / DSM 1962 / NBRC 6347 / NRRL 1970) (Soil fungus).